The sequence spans 365 residues: 3,4-dihydroxy-2-butanone 4-phosphate synthase (365 aa).

Residues 1–201 are DHBP synthase; the sequence is MALNTIDELI…IADLIHYRLI (201 aa). D-ribulose 5-phosphate is bound by residues 27–28, D32, 140–144, and E164; these read RE and RAGHT. E28 is a binding site for Mg(2+). Position 143 (H143) interacts with Mg(2+). The GTP cyclohydrolase II-like stretch occupies residues 202–365; that stretch reads HERTVERIAE…LEVVEYLPAE (164 aa).

It in the N-terminal section; belongs to the DHBP synthase family. This sequence in the C-terminal section; belongs to the GTP cyclohydrolase II family. Mg(2+) is required as a cofactor. It depends on Mn(2+) as a cofactor.

It carries out the reaction D-ribulose 5-phosphate = (2S)-2-hydroxy-3-oxobutyl phosphate + formate + H(+). Its pathway is cofactor biosynthesis; riboflavin biosynthesis; 2-hydroxy-3-oxobutyl phosphate from D-ribulose 5-phosphate: step 1/1. Its function is as follows. Catalyzes the conversion of D-ribulose 5-phosphate to formate and 3,4-dihydroxy-2-butanone 4-phosphate. In Pseudomonas aeruginosa (strain ATCC 15692 / DSM 22644 / CIP 104116 / JCM 14847 / LMG 12228 / 1C / PRS 101 / PAO1), this protein is 3,4-dihydroxy-2-butanone 4-phosphate synthase (ribB).